The following is a 193-amino-acid chain: Zinc finger protein AZF3 (193 aa).

C2H2-type zinc fingers lie at residues 75–97 (YKCGVCYKTFSSYQALGGHKASH) and 118–140 (HVCSVCGKSFATGQALGGHKRCH).

Expressed in roots.

The protein localises to the nucleus. Its function is as follows. Transcriptional repressor probably involved in abiotic stress responses. Binds DNA in a sequence-specific manner and can repress the transactivation activity of other transcription factors. In Arabidopsis thaliana (Mouse-ear cress), this protein is Zinc finger protein AZF3 (AZF3).